Consider the following 192-residue polypeptide: Peptidyl-tRNA hydrolase (192 aa).

Residue Y14 participates in tRNA binding. The active-site Proton acceptor is the H19. TRNA is bound by residues Y64, N66, and N112.

Belongs to the PTH family. As to quaternary structure, monomer.

Its subcellular location is the cytoplasm. The catalysed reaction is an N-acyl-L-alpha-aminoacyl-tRNA + H2O = an N-acyl-L-amino acid + a tRNA + H(+). Functionally, hydrolyzes ribosome-free peptidyl-tRNAs (with 1 or more amino acids incorporated), which drop off the ribosome during protein synthesis, or as a result of ribosome stalling. In terms of biological role, catalyzes the release of premature peptidyl moieties from peptidyl-tRNA molecules trapped in stalled 50S ribosomal subunits, and thus maintains levels of free tRNAs and 50S ribosomes. The sequence is that of Peptidyl-tRNA hydrolase from Anaeromyxobacter dehalogenans (strain 2CP-1 / ATCC BAA-258).